A 172-amino-acid polypeptide reads, in one-letter code: Trypsin inhibitor DE-3 (172 aa).

2 disulfide bridges follow: C39–C83 and C132–C139.

The protein belongs to the protease inhibitor I3 (leguminous Kunitz-type inhibitor) family.

In terms of biological role, inhibition of trypsin. The sequence is that of Trypsin inhibitor DE-3 from Erythrina latissima (Broad-leaved coral tree).